The sequence spans 264 residues: Protein hob3 (264 aa).

The BAR domain occupies 17–237 (VMMKTGHVER…FDNSVREDYS (221 aa)). Coiled-coil stretches lie at residues 25 to 65 (ERTV…AMTA) and 165 to 187 (RTEKEAAMAKEVYETLNNQLVSE).

Its subcellular location is the cytoplasm. It is found in the cytoskeleton. Involved in cytokinesis and septation where it has a role in the localization of F-actin. The sequence is that of Protein hob3 (hob3) from Schizosaccharomyces pombe (strain 972 / ATCC 24843) (Fission yeast).